A 447-amino-acid chain; its full sequence is Diaminopimelate decarboxylase (447 aa).

At lysine 72 the chain carries N6-(pyridoxal phosphate)lysine. Pyridoxal 5'-phosphate-binding positions include glycine 258 and 300-303 (EPGR). 3 residues coordinate substrate: arginine 303, arginine 344, and tyrosine 348. Cysteine 375 serves as the catalytic Proton donor. Substrate contacts are provided by glutamate 376 and tyrosine 405. Tyrosine 405 lines the pyridoxal 5'-phosphate pocket.

Belongs to the Orn/Lys/Arg decarboxylase class-II family. LysA subfamily. As to quaternary structure, homodimer. Pyridoxal 5'-phosphate is required as a cofactor.

The catalysed reaction is meso-2,6-diaminopimelate + H(+) = L-lysine + CO2. It participates in amino-acid biosynthesis; L-lysine biosynthesis via DAP pathway; L-lysine from DL-2,6-diaminopimelate: step 1/1. Specifically catalyzes the decarboxylation of meso-diaminopimelate (meso-DAP) to L-lysine. This chain is Diaminopimelate decarboxylase, found in Mycobacterium bovis (strain ATCC BAA-935 / AF2122/97).